We begin with the raw amino-acid sequence, 186 residues long: Elongation factor P (186 aa).

It belongs to the elongation factor P family.

It is found in the cytoplasm. Its pathway is protein biosynthesis; polypeptide chain elongation. Involved in peptide bond synthesis. Stimulates efficient translation and peptide-bond synthesis on native or reconstituted 70S ribosomes in vitro. Probably functions indirectly by altering the affinity of the ribosome for aminoacyl-tRNA, thus increasing their reactivity as acceptors for peptidyl transferase. The chain is Elongation factor P from Cupriavidus pinatubonensis (strain JMP 134 / LMG 1197) (Cupriavidus necator (strain JMP 134)).